Here is a 550-residue protein sequence, read N- to C-terminus: 65-kDa microtubule-associated protein 5 (550 aa).

2 coiled-coil regions span residues 46–174 (NKKV…QKVN) and 288–310 (IREA…KELV). Residues 471 to 531 (QFREQKRLQG…PGRSVTSGGK (61 aa)) form a disordered region. Polar residues predominate over residues 502–511 (QSLNTDNVTK).

Belongs to the MAP65/ASE1 family. Forms a dimer. Binds to MT, mostly with coaligned MT, both between parallel or antiparallel, forming thick bundles. Bundles polymerized MT via the formation of 25-nm crossbridges with cortical MT.

It localises to the nucleus. The protein resides in the cytoplasm. It is found in the cytoskeleton. Its subcellular location is the spindle. The protein localises to the phragmoplast. It localises to the cell cortex. The protein resides in the cell junction. It is found in the plasmodesma. Its function is as follows. Microtubule-associated protein that bundle and stabilize adjacent microtubules (MT) of the cell cortex. Confers MT resistance to the drug oryzalin. Promotes the formation of a planar network of antiparallel microtubules. This Arabidopsis thaliana (Mouse-ear cress) protein is 65-kDa microtubule-associated protein 5 (MAP65-5).